The following is a 307-amino-acid chain: MNSSSPISIDLIAEILSRVPSKSVARFRCVSKPWASMIRRPYFTELFLTRSSPKPCILFATVADGVWSFFSLPQYPYEKSSSASVAASAKFHVKFPPNNMRIGHNSDRRYFSYGYTSGLIYLYGDSSDDRSVICNPYTGEYAILPYLQRYRKTYSFLVFEPIEKQFKILFMAYLSGDRDHKILTVGTGNMKWRTIRCSLRYEIVSEGVSINGVLYYLGETSAWDNKDYDLKYDYAIVCFDIRSEKFIFFEIERFCRLINYKGKLAVIYFEDDVNYQSCLYRKKNYVEPDAINKLNVWVLEDVEKQEW.

The 48-residue stretch at 2-49 (NSSSPISIDLIAEILSRVPSKSVARFRCVSKPWASMIRRPYFTELFLT) folds into the F-box domain.

This chain is F-box protein At2g23160, found in Arabidopsis thaliana (Mouse-ear cress).